The sequence spans 698 residues: MASFAQVINPMTGQNTWQERGDDYDYHQEVANAGFGDMLHDWERNQKYDAAIRKTIAGMRQAGKQVHVLDIGTGTGILAMMALRAGADTVTACEAFVPMANCAARILAANDAAHVRLIRKRSTDIVMGVDMPHRANLLVAELLDTELIGEGAIGIYNHAHEELLTDDALCIPARATCYAQVAQSPLASQWNSLKILPDLDGDILLRPPTQLLQCSGEAALHDVQLSQLPPHSFHVLSEPTQIFHFDFQRKQPLELMRENVVRVQLSRPGSVELVFYWWQIELDDAGEQLLSCAPYWAHPELEQLKATCKDKQRPLANIVPWRDHWMQAIYYIPKALHLHDAGEEFWLRCYHDEYSLWFDAHKEQPEKPARRHSCTCDLHMTYTRNRIGQLNQSIRNKRYLAYLEQAVQSKSAHVLVMGDGCLLGLASAALGAASVYCLEPHRFSRRLLESVVKHNQLKNVKFLDSLKQLEPNELDTITHIFAEPYFLNSILPWDNFYFGTLLLQLEQLHQKLPANVEISPCAARIFALPVEFLDLHKIRAPIVSCEGFDLRLFDDMVQRSAEQALSQVEAQPLWEYPCRALAQPQQLLSVDFANFGVEQSNHGSIKLTAEGNCNGIALWVDWQLSPNENPKSIVSSGPLEPVETGQYVKWDMFVRQGVHFINQTTAEKKYLNWSTQFRPLLGELNFNFSLNANREKSE.

2 consecutive SAM-dependent MTase PRMT-type domains span residues 14–357 and 366–698; these read QNTW…YSLW and EKPA…EKSE.

It belongs to the class I-like SAM-binding methyltransferase superfamily. Protein arginine N-methyltransferase family. PRMT7 subfamily.

Essential arginine methyltransferase that can both catalyze the formation of omega-N monomethylarginine (MMA) and symmetrical dimethylarginine (sDMA). Specifically mediates the symmetrical dimethylation of arginine residues in the small nuclear ribonucleoproteins SmD1 and SmD3. This Drosophila mojavensis (Fruit fly) protein is Protein arginine N-methyltransferase 7 (Art7).